Here is a 320-residue protein sequence, read N- to C-terminus: UPF0053 protein in cps region (320 aa).

The helical transmembrane segment at 4 to 24 (CLSFLLMIGFSLIAEGFSFII) threads the bilayer. 2 CBS domains span residues 121–183 (MTSR…PLDL) and 186–244 (LVRQ…PNEV).

Belongs to the UPF0053 family.

The protein localises to the cell membrane. The sequence is that of UPF0053 protein in cps region from Klebsiella pneumoniae.